The primary structure comprises 275 residues: NH(3)-dependent NAD(+) synthetase (275 aa).

50–57 (GISGGVDS) is an ATP binding site. Residue aspartate 56 participates in Mg(2+) binding. Arginine 147 contributes to the deamido-NAD(+) binding site. Position 167 (threonine 167) interacts with ATP. A Mg(2+)-binding site is contributed by glutamate 172. Deamido-NAD(+) contacts are provided by lysine 180 and aspartate 187. Residues lysine 196 and threonine 218 each coordinate ATP. Deamido-NAD(+) is bound at residue 267–268 (HK).

It belongs to the NAD synthetase family. In terms of assembly, homodimer.

It catalyses the reaction deamido-NAD(+) + NH4(+) + ATP = AMP + diphosphate + NAD(+) + H(+). The protein operates within cofactor biosynthesis; NAD(+) biosynthesis; NAD(+) from deamido-NAD(+) (ammonia route): step 1/1. Its function is as follows. Catalyzes the ATP-dependent amidation of deamido-NAD to form NAD. Uses ammonia as a nitrogen source. The sequence is that of NH(3)-dependent NAD(+) synthetase from Pseudomonas putida (strain ATCC 47054 / DSM 6125 / CFBP 8728 / NCIMB 11950 / KT2440).